Here is a 252-residue protein sequence, read N- to C-terminus: Small ribosomal subunit protein uS2 (252 aa).

Belongs to the universal ribosomal protein uS2 family.

This is Small ribosomal subunit protein uS2 from Chlorobium phaeobacteroides (strain DSM 266 / SMG 266 / 2430).